A 169-amino-acid polypeptide reads, in one-letter code: Ribonuclease H (169 aa).

An RNase H type-1 domain is found at 3–159 (AHAALTLYTD…CDRLATDAAR (157 aa)). Positions 12, 63, 87, and 151 each coordinate Mg(2+).

It belongs to the RNase H family. Monomer. Mg(2+) is required as a cofactor.

It is found in the cytoplasm. The enzyme catalyses Endonucleolytic cleavage to 5'-phosphomonoester.. Its function is as follows. Endonuclease that specifically degrades the RNA of RNA-DNA hybrids. In Treponema pallidum subsp. pallidum (strain SS14), this protein is Ribonuclease H.